Reading from the N-terminus, the 890-residue chain is Translation initiation factor IF-2 (890 aa).

The tract at residues 45 to 304 (LIDHLNQKNS…LQQGFQKPAQ (260 aa)) is disordered. Positions 67 to 81 (STLNIPGTGGKSKSV) are enriched in polar residues. Residues 92-217 (VKRDPQEAER…RMAEENKWTD (126 aa)) show a composition bias toward basic and acidic residues. Basic residues predominate over residues 252-266 (GRGRNAKAARPKKGN). Residues 267–280 (KHAESKADREEARA) show a composition bias toward basic and acidic residues. The tr-type G domain occupies 389–558 (PRAPVVTIMG…LLQAEVLELK (170 aa)). The tract at residues 398–405 (GHVDHGKT) is G1. 398-405 (GHVDHGKT) lines the GTP pocket. A G2 region spans residues 423–427 (GITQH). The G3 stretch occupies residues 444-447 (DTPG). Residues 444–448 (DTPGH) and 498–501 (NKID) contribute to the GTP site. A G4 region spans residues 498–501 (NKID). The interval 534–536 (SAK) is G5. An N6-acetyllysine modification is found at Lys-808.

This sequence belongs to the TRAFAC class translation factor GTPase superfamily. Classic translation factor GTPase family. IF-2 subfamily.

It localises to the cytoplasm. In terms of biological role, one of the essential components for the initiation of protein synthesis. Protects formylmethionyl-tRNA from spontaneous hydrolysis and promotes its binding to the 30S ribosomal subunits. Also involved in the hydrolysis of GTP during the formation of the 70S ribosomal complex. This Escherichia coli O127:H6 (strain E2348/69 / EPEC) protein is Translation initiation factor IF-2.